The following is a 69-amino-acid chain: Parvalbumin beta 3 (69 aa).

Residue Ala1 is modified to N-acetylalanine. The EF-hand domain maps to 24–59 (FNYKTFFKFFAIIDQDHSGFIEEEELKLFLQTFSAG). Ca(2+) contacts are provided by Asp37, Asp39, Ser41, Phe43, Glu45, and Glu48.

The protein belongs to the parvalbumin family.

In terms of biological role, in muscle, parvalbumin is thought to be involved in relaxation after contraction. It binds two calcium ions. The protein is Parvalbumin beta 3 of Merluccius polli (Benguela hake).